The chain runs to 89 residues: Small ribosomal subunit protein uS15 (89 aa).

The protein belongs to the universal ribosomal protein uS15 family. In terms of assembly, part of the 30S ribosomal subunit. Forms a bridge to the 50S subunit in the 70S ribosome, contacting the 23S rRNA.

In terms of biological role, one of the primary rRNA binding proteins, it binds directly to 16S rRNA where it helps nucleate assembly of the platform of the 30S subunit by binding and bridging several RNA helices of the 16S rRNA. Functionally, forms an intersubunit bridge (bridge B4) with the 23S rRNA of the 50S subunit in the ribosome. This chain is Small ribosomal subunit protein uS15, found in Colwellia psychrerythraea (strain 34H / ATCC BAA-681) (Vibrio psychroerythus).